We begin with the raw amino-acid sequence, 418 residues long: Vasopressin V1a receptor (418 aa).

Residues 1 to 15 (MRFSGSPSPGPSNSS) are compositionally biased toward low complexity. A disordered region spans residues 1–20 (MRFSGSPSPGPSNSSRWWPL). Over 1 to 51 (MRFSGSPSPGPSNSSRWWPLDAGDANTSGDLAGLGEDGGPQADTRNEELAK) the chain is Extracellular. Residues Asn-13 and Asn-26 are each glycosylated (N-linked (GlcNAc...) asparagine). The helical transmembrane segment at 52–75 (LEIAVLAVIFVVAVLGNSSVLLAL) threads the bilayer. The Cytoplasmic portion of the chain corresponds to 76 to 87 (HRTPRKTSRMHL). The helical transmembrane segment at 88 to 109 (FIRHLSLADLAVAFFQVLPQLG) threads the bilayer. Residues 110–124 (WDITYRFRGPDGLCR) lie on the Extracellular side of the membrane. Residues Cys-123 and Cys-202 are joined by a disulfide bond. The helical transmembrane segment at 125–146 (VVKHMQVFAMFASAYMLVVMTA) threads the bilayer. The Cytoplasmic portion of the chain corresponds to 147-167 (DRYIAVCHPLKTLQQPARRSR). The chain crosses the membrane as a helical span at residues 168–189 (LMIAAAWVLSFVLSTPQYFVFS). Residues 190–217 (MVEVSNVTKTYDCWANFIHPWGLPAYVT) are Extracellular-facing. Asn-195 carries an N-linked (GlcNAc...) asparagine glycan. The helical transmembrane segment at 218–238 (WMTGSVFVAPVVILGTCYGFI) threads the bilayer. Residues 239-293 (CYHIWRKVRGKTAGRQGGPAEGAGESALYRGVLHARCVSSVKTISRAKIRTVKMT) lie on the Cytoplasmic side of the membrane. A helical membrane pass occupies residues 294–313 (FVIVTAYIVCWAPFFIIQMW). The Extracellular portion of the chain corresponds to 314–331 (SAWDKNFSWVESENPATA). Asn-319 is a glycosylation site (N-linked (GlcNAc...) asparagine). A helical transmembrane segment spans residues 332-351 (IPALLASLNSCCNPWIYMFF). The Cytoplasmic portion of the chain corresponds to 352–418 (SGHLLQDCAQ…KSIKFIPVST (67 aa)). S-palmitoyl cysteine attachment occurs at residues Cys-365 and Cys-366. Residues 377-418 (GSDSMSRRQTSFTNNRSPTNSMGTWKDSPKSSKSIKFIPVST) are disordered. Residues 383-399 (RRQTSFTNNRSPTNSMG) are compositionally biased toward polar residues. A Phosphoserine modification is found at Ser-404.

Belongs to the G-protein coupled receptor 1 family. Vasopressin/oxytocin receptor subfamily.

It is found in the cell membrane. Functionally, receptor for arginine vasopressin. The activity of this receptor is mediated by G proteins which activate a phosphatidyl-inositol-calcium second messenger system. This chain is Vasopressin V1a receptor (AVPR1A), found in Ovis aries (Sheep).